The sequence spans 170 residues: Cytochrome P450 monooxygenase oryQ (170 aa).

Heme is bound at residue Cys-85.

It belongs to the cytochrome P450 family. The cofactor is heme.

It functions in the pathway secondary metabolite biosynthesis. Functionally, cytochrome P450 monooxygenase; part of the gene cluster that mediates the biosynthesis of oryzines, natural products with an unusual maleidride backbone. The two subunits of the fungal fatty acid synthase oryfasA and oryfasB probably form octenoic acid. This fatty acid is most likely activated by the acyl-CoA ligase oryP to give octenyl-CoA before the citrate synthase-like protein oryE catalyzes condensation with oxaloacetate to form tricarboxylic acid. The next steps of the pathways are conjectural, but a favorite possible route has been proposed, beginning with decarboxylation and concomitant dehydration by the decarboxylase oryM, followed by tautomerization, which may lead to the production of a diene intermediate. Reduction of this diene intermediate could give the known metabolite piliformic acid. On the pathway to oryzine B and oryzine A, however, hydroxylation of the diene by the alpha-ketoglutarate-dependent dioxygenase oryG and lactonisation by the lactonohydrolases oryH or oryL could give oryzine B directly. Finally, enoyl reduction by the dehydrogenase oryD would then convert oryzine B into oryzine A. The chain is Cytochrome P450 monooxygenase oryQ from Aspergillus oryzae (strain ATCC 42149 / RIB 40) (Yellow koji mold).